A 69-amino-acid chain; its full sequence is uncharacterized protein (69 aa).

This is an uncharacterized protein from Escherichia coli O6:H1 (strain CFT073 / ATCC 700928 / UPEC).